A 132-amino-acid chain; its full sequence is Small ribosomal subunit protein uS11 (132 aa).

This sequence belongs to the universal ribosomal protein uS11 family. As to quaternary structure, part of the 30S ribosomal subunit.

Its function is as follows. Located on the platform of the 30S subunit. The polypeptide is Small ribosomal subunit protein uS11 (Caldivirga maquilingensis (strain ATCC 700844 / DSM 13496 / JCM 10307 / IC-167)).